Reading from the N-terminus, the 264-residue chain is Thymidylate synthase (264 aa).

Residue Arg-21 coordinates dUMP. A (6R)-5,10-methylene-5,6,7,8-tetrahydrofolate-binding site is contributed by His-51. 126 to 127 (RR) is a binding site for dUMP. The Nucleophile role is filled by Cys-146. Residues 166 to 169 (RSAD), Asn-177, and 207 to 209 (HLY) each bind dUMP. Residue Asp-169 coordinates (6R)-5,10-methylene-5,6,7,8-tetrahydrofolate. Residue Ala-263 participates in (6R)-5,10-methylene-5,6,7,8-tetrahydrofolate binding.

It belongs to the thymidylate synthase family. Bacterial-type ThyA subfamily. In terms of assembly, homodimer.

It is found in the cytoplasm. It carries out the reaction dUMP + (6R)-5,10-methylene-5,6,7,8-tetrahydrofolate = 7,8-dihydrofolate + dTMP. It functions in the pathway pyrimidine metabolism; dTTP biosynthesis. Catalyzes the reductive methylation of 2'-deoxyuridine-5'-monophosphate (dUMP) to 2'-deoxythymidine-5'-monophosphate (dTMP) while utilizing 5,10-methylenetetrahydrofolate (mTHF) as the methyl donor and reductant in the reaction, yielding dihydrofolate (DHF) as a by-product. This enzymatic reaction provides an intracellular de novo source of dTMP, an essential precursor for DNA biosynthesis. In Rhodopirellula baltica (strain DSM 10527 / NCIMB 13988 / SH1), this protein is Thymidylate synthase.